A 592-amino-acid polypeptide reads, in one-letter code: Putative nucleoside-triphosphatase (592 aa).

The Proton acceptor role is filled by Glu200.

This sequence belongs to the GDA1/CD39 NTPase family.

The enzyme catalyses a ribonucleoside 5'-triphosphate + H2O = a ribonucleoside 5'-diphosphate + phosphate + H(+). The polypeptide is Putative nucleoside-triphosphatase (NTP4) (Toxoplasma gondii).